We begin with the raw amino-acid sequence, 145 residues long: HTH-type transcriptional regulator MhqR (145 aa).

Residues 5–137 (SLKLFIVLSR…CTEMLKRVGL (133 aa)) enclose the HTH marR-type domain. The H-T-H motif DNA-binding region spans 51 to 74 (LQQIGDKILLASGSITYVVDKLEQ).

Functionally, negatively regulates mhqA, mhqED, mhqNOP, and azoR2 which may contribute to the degradation of aromatic compounds. This Bacillus subtilis (strain 168) protein is HTH-type transcriptional regulator MhqR (mhqR).